Here is an 806-residue protein sequence, read N- to C-terminus: Phosphatidylinositol 4-kinase beta (806 aa).

The PIK helical domain maps to 55–247 (LDKVKLIRGS…GTKLRKLILS (193 aa)). 2 disordered regions span residues 69–104 (LDKIDGSDTGDGGSLANGDAGPRHSESCGPPVSASR) and 253–310 (AHKK…DEPV). The segment covering 283-302 (DATVSISLSSNLKRTSSNPK) has biased composition (polar residues). The region spanning 525 to 791 (EPWQEKVRRI…MVDGSMRSIT (267 aa)) is the PI3K/PI4K catalytic domain. The segment at 531–537 (VRRIREG) is G-loop. The interval 658–666 (QVKDRHNGN) is catalytic loop. Residues 677 to 701 (HIDFGFILSSSPRNLGFETSAFKLT) form an activation loop region.

This sequence belongs to the PI3/PI4-kinase family. Type III PI4K subfamily. The cofactor is Mg(2+). Requires Mn(2+) as cofactor.

It is found in the endomembrane system. Its subcellular location is the mitochondrion outer membrane. It localises to the rough endoplasmic reticulum membrane. The enzyme catalyses a 1,2-diacyl-sn-glycero-3-phospho-(1D-myo-inositol) + ATP = a 1,2-diacyl-sn-glycero-3-phospho-(1D-myo-inositol 4-phosphate) + ADP + H(+). In terms of biological role, phosphorylates phosphatidylinositol (PI) in the first committed step in the production of the second messenger inositol-1,4,5,-trisphosphate (PIP). May play an important role in the inner ear development. In Xenopus tropicalis (Western clawed frog), this protein is Phosphatidylinositol 4-kinase beta (pi4kb).